The following is a 378-amino-acid chain: Glutamate 5-kinase (378 aa).

Lys17 provides a ligand contact to ATP. 3 residues coordinate substrate: Ser58, Asp145, and Asn157. ATP-binding positions include 177–178 (TD) and 221–227 (TGGMMTK). The PUA domain occupies 286 to 364 (VGKLYLDSGA…KEIPTILGYV (79 aa)).

The protein belongs to the glutamate 5-kinase family.

The protein resides in the cytoplasm. It carries out the reaction L-glutamate + ATP = L-glutamyl 5-phosphate + ADP. It participates in amino-acid biosynthesis; L-proline biosynthesis; L-glutamate 5-semialdehyde from L-glutamate: step 1/2. Its function is as follows. Catalyzes the transfer of a phosphate group to glutamate to form L-glutamate 5-phosphate. This is Glutamate 5-kinase from Nostoc sp. (strain PCC 7120 / SAG 25.82 / UTEX 2576).